The chain runs to 117 residues: Large ribosomal subunit protein bL20c (117 aa).

It belongs to the bacterial ribosomal protein bL20 family.

Its subcellular location is the plastid. It localises to the chloroplast. Functionally, binds directly to 23S ribosomal RNA and is necessary for the in vitro assembly process of the 50S ribosomal subunit. It is not involved in the protein synthesizing functions of that subunit. The sequence is that of Large ribosomal subunit protein bL20c from Populus trichocarpa (Western balsam poplar).